Reading from the N-terminus, the 193-residue chain is Penicillin-binding protein activator LpoB (193 aa).

The first 16 residues, 1–16, serve as a signal peptide directing secretion; that stretch reads MKKYLGVILAALVLTG. Residue Cys-17 is the site of N-palmitoyl cysteine attachment. A lipid anchor (S-diacylglycerol cysteine) is attached at Cys-17. Residues 17–55 form a disordered region; the sequence is CPSRPPEPTEPPATIEPVEPQVPTTPTLPPGESVPQPPK. The segment covering 28–41 has biased composition (low complexity); that stretch reads PATIEPVEPQVPTT.

This sequence belongs to the LpoB family. As to quaternary structure, interacts with PBP1b.

Its subcellular location is the cell outer membrane. Functionally, regulator of peptidoglycan synthesis that is essential for the function of penicillin-binding protein 1B (PBP1b). This chain is Penicillin-binding protein activator LpoB, found in Pectobacterium carotovorum subsp. carotovorum (strain PC1).